The following is a 128-amino-acid chain: V-type proton ATPase subunit F (128 aa).

Belongs to the V-ATPase F subunit family. As to quaternary structure, V-ATPase is a heteromultimeric enzyme composed of a peripheral catalytic V1 complex (components A to H) attached to an integral membrane V0 proton pore complex (components: a, c, c'', d and e).

The protein resides in the vacuole membrane. Functionally, subunit of the peripheral V1 complex of vacuolar ATPase essential for assembly or catalytic function. V-ATPase is responsible for acidifying a variety of intracellular compartments in eukaryotic cells. The protein is V-type proton ATPase subunit F (VHA-F) of Arabidopsis thaliana (Mouse-ear cress).